The chain runs to 313 residues: 2,3-dihydroxyphenylpropionate/2,3-dihydroxicinnamic acid 1,2-dioxygenase (313 aa).

Histidine 115 functions as the Proton donor in the catalytic mechanism. The Proton acceptor role is filled by histidine 179.

It belongs to the LigB/MhpB extradiol dioxygenase family. As to quaternary structure, homotetramer. Requires Fe(2+) as cofactor.

It carries out the reaction 3-(2,3-dihydroxyphenyl)propanoate + O2 = (2Z,4E)-2-hydroxy-6-oxonona-2,4-dienedioate + H(+). It catalyses the reaction (2E)-3-(2,3-dihydroxyphenyl)prop-2-enoate + O2 = (2Z,4E,7E)-2-hydroxy-6-oxonona-2,4,7-trienedioate + H(+). It participates in aromatic compound metabolism; 3-phenylpropanoate degradation. Its function is as follows. Catalyzes the non-heme iron(II)-dependent oxidative cleavage of 2,3-dihydroxyphenylpropionic acid and 2,3-dihydroxicinnamic acid into 2-hydroxy-6-ketononadienedioate and 2-hydroxy-6-ketononatrienedioate, respectively. This Mycobacterium ulcerans (strain Agy99) protein is 2,3-dihydroxyphenylpropionate/2,3-dihydroxicinnamic acid 1,2-dioxygenase.